The sequence spans 123 residues: Holo-[acyl-carrier-protein] synthase (123 aa).

Residues D8 and E56 each coordinate Mg(2+).

Belongs to the P-Pant transferase superfamily. AcpS family. It depends on Mg(2+) as a cofactor.

It is found in the cytoplasm. It carries out the reaction apo-[ACP] + CoA = holo-[ACP] + adenosine 3',5'-bisphosphate + H(+). Transfers the 4'-phosphopantetheine moiety from coenzyme A to a Ser of acyl-carrier-protein. This Clostridium beijerinckii (strain ATCC 51743 / NCIMB 8052) (Clostridium acetobutylicum) protein is Holo-[acyl-carrier-protein] synthase.